The sequence spans 418 residues: Gamma-glutamyl phosphate reductase (418 aa).

Residues 1–18 show a composition bias toward basic and acidic residues; that stretch reads MAIQDEMRQVAEGAREAS. A disordered region spans residues 1-22; the sequence is MAIQDEMRQVAEGAREASRTLS.

This sequence belongs to the gamma-glutamyl phosphate reductase family.

Its subcellular location is the cytoplasm. It carries out the reaction L-glutamate 5-semialdehyde + phosphate + NADP(+) = L-glutamyl 5-phosphate + NADPH + H(+). It participates in amino-acid biosynthesis; L-proline biosynthesis; L-glutamate 5-semialdehyde from L-glutamate: step 2/2. Catalyzes the NADPH-dependent reduction of L-glutamate 5-phosphate into L-glutamate 5-semialdehyde and phosphate. The product spontaneously undergoes cyclization to form 1-pyrroline-5-carboxylate. This Syntrophus aciditrophicus (strain SB) protein is Gamma-glutamyl phosphate reductase.